A 548-amino-acid polypeptide reads, in one-letter code: Tripartite motif-containing protein 55 (548 aa).

The RING-type zinc finger occupies 10–66 (FSKEQQTMDNLEKQLICPICLEMFTKPVVILPCQHNLCRKCASDIFQASNPYLPTRG). The B box-type zinc-finger motif lies at 103 to 145 (NIIDIYKQESTRPEKKSDQPMCEEHEEERINIYCLNCEVPTCS). Residues cysteine 124, histidine 127, cysteine 147, and histidine 153 each contribute to the Zn(2+) site. Positions 168 to 248 (QKSELSDGIA…EKLEHVRALI (81 aa)) form a coiled coil. The 59-residue stretch at 269-327 (MDEPEMAVFLQNAKTLLKKISEASKAFQMEKIEHGYENMNHFTVNLNREEKIIREIDFY) folds into the COS domain. Residues 326–532 (FYREDEDEEE…PASGSGADSE (207 aa)) are disordered. Composition is skewed to acidic residues over residues 328 to 339 (REDEDEEEEEGG) and 347 to 360 (GEVG…EEVE). Composition is skewed to low complexity over residues 484 to 496 (VAAA…AAVS) and 512 to 531 (EAPP…GADS).

Homooligomer and heterooligomer. Interacts with titin/TTN. Interacts with myosins. Interacts with SQSTM1 and NBR1. Isoform 4 may not able to interact with isoform 1, isoform 2 and isoform 3. Probably interacts with TRIM63 and TRIM54. Post-translationally, targeted for degradation through the proteasomal and lysosomal pathways in the presence of SUMO3. Highly expressed in muscle. Low-level expression in liver.

It is found in the nucleus. It localises to the cytoplasm. The enzyme catalyses S-ubiquitinyl-[E2 ubiquitin-conjugating enzyme]-L-cysteine + [acceptor protein]-L-lysine = [E2 ubiquitin-conjugating enzyme]-L-cysteine + N(6)-ubiquitinyl-[acceptor protein]-L-lysine.. Its function is as follows. E3 ubiquitin ligase that plays an important role in regulating cardiac development and contractility, muscle growth, metabolism, and fiber-type differentiation. Acts as a critical factor that regulates cardiomyocyte size during development in concert with TRIM63 by regulating E2F1-mediated gene expression. Plays a role in apoptosis induction in cardiomyocytes by promoting ubiquitination of the DUSP1 phosphatase. Promotes non-canonical NF-kappa-B signaling and B-cell-mediated immune responses by mediating NFKB2 'Lys-48'-linked ubiquitination and processing. In turn, NFKB2 is further processed by valosin-containing protein/VCP, an ATPase that mediates ubiquitin-dependent protein degradation by the proteasome. May play a role in preventing macrophages from producing inflammatory factors and migrating by downregulating the level of nuclear NF-kappa-B subunit RELA. Also modifies PPARG via polyubiquitination and accelerates PPARG proteasomal degradation to inhibit its activity. This Homo sapiens (Human) protein is Tripartite motif-containing protein 55 (TRIM55).